The chain runs to 129 residues: Methylmalonyl-CoA decarboxylase subunit gamma (129 aa).

2 stretches are compositionally biased toward low complexity: residues 24 to 39 (APAAAPKAAPAAAPAP) and 49 to 58 (PAAAAAPVPA). Residues 24-58 (APAAAPKAAPAAAPAPKAAPAPAPAPAAAAAPVPA) are disordered. Residues 51–129 (AAAAPVPAGA…STGDDMVVLG (79 aa)) enclose the Biotinyl-binding domain. Lys95 bears the N6-biotinyllysine mark.

As to quaternary structure, the methylmalonyl-CoA decarboxylase is composed of five subunits: the carboxyltransferase alpha subunit (MmdA), the tunnel beta subunit (MmdB), the biotin-containing gamma subunit (MmdC), and the delta (MmdD) and epsilon (MmdE) subunits. Biotin serves as cofactor.

Its subcellular location is the cell membrane. It catalyses the reaction (S)-methylmalonyl-CoA + Na(+)(in) + H(+)(out) = propanoyl-CoA + Na(+)(out) + CO2. Its activity is regulated as follows. Completely inhibited by avidin. In terms of biological role, biotin-containing subunit of the sodium ion pump methylmalonyl-CoA decarboxylase, which converts the chemical energy of a decarboxylation reaction into an electrochemical gradient of Na(+) ions across the cytoplasmic membrane, thereby creating a sodium ion motive force that is used for ATP synthesis. Can also convert malonyl-CoA into acetyl-CoA. This Veillonella parvula (Staphylococcus parvulus) protein is Methylmalonyl-CoA decarboxylase subunit gamma.